A 493-amino-acid polypeptide reads, in one-letter code: Tripartite motif-containing protein 5 (493 aa).

Ala-2 is modified (N-acetylalanine). The segment at 15-58 (CPICLELLTQPLSLDCGHSFCQACLTANHKTSMPDGERSCPVCR) adopts an RING-type zinc-finger fold. Ser-85 bears the Phosphoserine mark. The B box-type zinc-finger motif lies at 90 to 131 (QKVDHCARHGEKLLLFCREDRKVICWLCERSQEHRGHHTFLM). Zn(2+)-binding residues include Cys-95, His-98, Cys-117, and His-123. A coiled-coil region spans residues 130-240 (LMEEVAQEYQ…LISDLEHRLQ (111 aa)). The segment at 185–198 (FEQLRHILDWVESN) is required for interaction with GABARAP and for autophagy. Positions 281 to 493 (LQVTLEVLRE…VPMTLCSPSS (213 aa)) constitute a B30.2/SPRY domain.

Belongs to the TRIM/RBCC family. Can form homodimers and homotrimers. In addition to lower-order dimerization, also exhibits a higher-order multimerization and both low- and high-order multimerizations are essential for its restriction activity. Interacts with BTBD1 and BTBD2. Interacts with PSMC4, PSMC5, PSMD7 and HSPA8/HSC70. Interacts (via B30.2/SPRY domain) with HSPA1A/B. Interacts with PSMC2, MAP3K7/TAK1, TAB2 and TAB3. Interacts with SQSTM1. Interacts with TRIM6 and TRIM34. Interacts with ULK1 (phosphorylated form), GABARAP, GABARAPL1, GABARAPL2, MAP1LC3A, MAP1LC3C and BECN1. In terms of processing, degraded in a proteasome-independent fashion in the absence of viral infection but in a proteasome-dependent fashion following exposure to restriction sensitive virus. Autoubiquitinated in a RING finger- and UBE2D2-dependent manner. Monoubiquitinated by TRIM21. Deubiquitinated by Yersinia YopJ. Ubiquitination may not lead to proteasomal degradation.

It localises to the cytoplasm. The protein localises to the nucleus. It catalyses the reaction S-ubiquitinyl-[E2 ubiquitin-conjugating enzyme]-L-cysteine + [acceptor protein]-L-lysine = [E2 ubiquitin-conjugating enzyme]-L-cysteine + N(6)-ubiquitinyl-[acceptor protein]-L-lysine.. Its pathway is protein modification; protein ubiquitination. Its function is as follows. Capsid-specific restriction factor that prevents infection from non-host-adapted retroviruses. Blocks viral replication early in the life cycle, after viral entry but before reverse transcription. In addition to acting as a capsid-specific restriction factor, also acts as a pattern recognition receptor that activates innate immune signaling in response to the retroviral capsid lattice. Binding to the viral capsid triggers its E3 ubiquitin ligase activity, and in concert with the heterodimeric ubiquitin conjugating enzyme complex UBE2V1-UBE2N (also known as UBC13-UEV1A complex) generates 'Lys-63'-linked polyubiquitin chains, which in turn are catalysts in the autophosphorylation of the MAP3K7/TAK1 complex (includes TAK1, TAB2, and TAB3). Activation of the MAP3K7/TAK1 complex by autophosphorylation results in the induction and expression of NF-kappa-B and MAPK-responsive inflammatory genes, thereby leading to an innate immune response in the infected cell. Plays a role in regulating autophagy through activation of autophagy regulator BECN1 by causing its dissociation from its inhibitors BCL2 and TAB2. In Hylobates lar (Lar gibbon), this protein is Tripartite motif-containing protein 5 (TRIM5).